A 1341-amino-acid chain; its full sequence is MVYSYTEKKRIRKDFGTRPQVLDIPYLLSIQLDSFEKFIEQDPEGQYGLEAAFRSVFPIQSYNGNSELQYVSYRLGEPVFDVKECQIRGVTYSKPLRVKLRLVIFDKDAPAGTVKDIKEQEVYMGEIPLMTENGTFVINGTERVIVSQLHRSPGVFFDSDKGKTHSSGKVLYNARIIPYRGSWLDFEFDPKDNLYVRIDRRRKLPASIILRVLGKTSAEILDIFFEKVNFEVKDQTLMMELVPERLRGETATFDIEADGKVYVEKGRRVTARHIRQLEKDGVNFIEVPVEYIVGKVSAKDYVNEATGELIITANQEISLEALANLSQAGYKKLEVLFTNDLDHGPFMSETLRVDSTTDRISALVEIYRMMRPGEPPTKEAAESLFESLFFSAERYDLSTVGRMKFNSSIGREDAEEQGTLDEVDIIEVMKKLISIRNGKGEVDDIDHLGNRRIRSVGEMAENQFRVGLVRVERAVKERLSLGDLDNVMPQDLINAKPISAAVKEFFGSSQLSQFMDQNNPLSEVTHKRRISALGPGGLTRERAGFEVRDVHVTHYGRLCPIETPEGPNIGLINSLSAFARCNEYGFLETPYRRVVNGVVTDEVDYLSAIEEGQFVIAQANAKLTEEGGFADELVTARQKGESGLHPREHVDYMDVATNQVVSIAASLIPFLEHDDANRALMGANMQRQAVPTLRSEKPLVGTGIERNVAVDSGVTAVAKRGGVIQSVDASRIVVKVNEEELIPGEAGIDIYNLTKYTRSNQNTCINQRPCVMPGEPVARGDVLADGPSTDLGELALGQNMRIAFMPWNGYNFEDSILVSERVVQDDRFTTIHIQELSCVARDTKLGAEEITADIPNVGEAALSKLDESGIVYIGAEVKGGDILVGKVTPKGETQLTPEEKLLRAIFGEKASDVKDTSLRVPNSVAGTVIDVQVFTRDGVEKDKRALEIEQMQLKEAKKDLTEEFQILEGGLLARVRSVLLAGGYTEAKLSSIERKKWLEQTLENEELQNQLEQLAEQYDELKADFDKKFEAKRRKITQGDDLAPGVLKIVKVYLAVKRRIQPGDKMAGRHGNKGVISKINPVEDMPYDENGQPVDIVLNPLGVPSRMNIGQILEVHLGLAAKGIGDKINQMIKEQQELAKLREFLQKVYDLGDTRQRVDISELSDEDVRTLAHNLRAGLPVATPVFDGAPESSIKAMLELADLPASGQLTLFDGRTGDAFERPVTVGYMYMLKLNHLVDDKMHARSTGSYSLVTQQPLGGKAQFGGQRFGEMEVWALEAYGAAYTLQEMLTVKSDDVNGRTKMYKNIVDGNHAMEPGMPESFNVLLKEIRSLGINIELEDE.

Belongs to the RNA polymerase beta chain family. As to quaternary structure, the RNAP catalytic core consists of 2 alpha, 1 beta, 1 beta' and 1 omega subunit. When a sigma factor is associated with the core the holoenzyme is formed, which can initiate transcription.

The enzyme catalyses RNA(n) + a ribonucleoside 5'-triphosphate = RNA(n+1) + diphosphate. Its function is as follows. DNA-dependent RNA polymerase catalyzes the transcription of DNA into RNA using the four ribonucleoside triphosphates as substrates. This is DNA-directed RNA polymerase subunit beta from Vibrio cholerae serotype O1 (strain ATCC 39541 / Classical Ogawa 395 / O395).